We begin with the raw amino-acid sequence, 291 residues long: S-methyl-5'-thioadenosine phosphorylase (291 aa).

Residues serine 12, 54–55 (RH), and 87–88 (SA) each bind phosphate. A substrate-binding site is contributed by methionine 185. Phosphate is bound at residue threonine 186. 209 to 211 (DFD) serves as a coordination point for substrate.

The protein belongs to the PNP/MTAP phosphorylase family. MTAP subfamily. In terms of assembly, homohexamer. Dimer of a homotrimer.

The catalysed reaction is S-methyl-5'-thioadenosine + phosphate = 5-(methylsulfanyl)-alpha-D-ribose 1-phosphate + adenine. The protein operates within amino-acid biosynthesis; L-methionine biosynthesis via salvage pathway; S-methyl-5-thio-alpha-D-ribose 1-phosphate from S-methyl-5'-thioadenosine (phosphorylase route): step 1/1. In terms of biological role, catalyzes the reversible phosphorylation of S-methyl-5'-thioadenosine (MTA) to adenine and 5-methylthioribose-1-phosphate. Involved in the breakdown of MTA, a major by-product of polyamine biosynthesis. Responsible for the first step in the methionine salvage pathway after MTA has been generated from S-adenosylmethionine. Has broad substrate specificity with 6-aminopurine nucleosides as preferred substrates. The chain is S-methyl-5'-thioadenosine phosphorylase from Bradyrhizobium diazoefficiens (strain JCM 10833 / BCRC 13528 / IAM 13628 / NBRC 14792 / USDA 110).